Here is a 242-residue protein sequence, read N- to C-terminus: Ubiquinone biosynthesis O-methyltransferase (242 aa).

S-adenosyl-L-methionine contacts are provided by Arg-44, Gly-64, Asp-85, and Met-129.

It belongs to the methyltransferase superfamily. UbiG/COQ3 family.

The catalysed reaction is a 3-demethylubiquinol + S-adenosyl-L-methionine = a ubiquinol + S-adenosyl-L-homocysteine + H(+). The enzyme catalyses a 3-(all-trans-polyprenyl)benzene-1,2-diol + S-adenosyl-L-methionine = a 2-methoxy-6-(all-trans-polyprenyl)phenol + S-adenosyl-L-homocysteine + H(+). Its pathway is cofactor biosynthesis; ubiquinone biosynthesis. O-methyltransferase that catalyzes the 2 O-methylation steps in the ubiquinone biosynthetic pathway. The chain is Ubiquinone biosynthesis O-methyltransferase from Salmonella choleraesuis (strain SC-B67).